Here is a 330-residue protein sequence, read N- to C-terminus: ADP-L-glycero-D-manno-heptose-6-epimerase (330 aa).

Residues 11 to 12, 32 to 33, lysine 39, lysine 54, 75 to 79, and asparagine 92 each bind NADP(+); these read FI, DN, and EGACS. Tyrosine 139 functions as the Proton acceptor in the catalytic mechanism. NADP(+) is bound at residue lysine 143. Asparagine 168 contacts substrate. NADP(+)-binding residues include valine 169 and lysine 177. Lysine 177 acts as the Proton acceptor in catalysis. Substrate-binding positions include arginine 179, histidine 186, 200–203, arginine 213, and tyrosine 292; that span reads FGEY.

The protein belongs to the NAD(P)-dependent epimerase/dehydratase family. HldD subfamily. In terms of assembly, homopentamer. It depends on NADP(+) as a cofactor.

The enzyme catalyses ADP-D-glycero-beta-D-manno-heptose = ADP-L-glycero-beta-D-manno-heptose. The protein operates within nucleotide-sugar biosynthesis; ADP-L-glycero-beta-D-manno-heptose biosynthesis; ADP-L-glycero-beta-D-manno-heptose from D-glycero-beta-D-manno-heptose 7-phosphate: step 4/4. Its function is as follows. Catalyzes the interconversion between ADP-D-glycero-beta-D-manno-heptose and ADP-L-glycero-beta-D-manno-heptose via an epimerization at carbon 6 of the heptose. In Paraburkholderia phymatum (strain DSM 17167 / CIP 108236 / LMG 21445 / STM815) (Burkholderia phymatum), this protein is ADP-L-glycero-D-manno-heptose-6-epimerase.